A 260-amino-acid chain; its full sequence is Imidazole glycerol phosphate synthase subunit HisF (260 aa).

Active-site residues include D11 and D130.

This sequence belongs to the HisA/HisF family. As to quaternary structure, heterodimer of HisH and HisF.

It localises to the cytoplasm. It catalyses the reaction 5-[(5-phospho-1-deoxy-D-ribulos-1-ylimino)methylamino]-1-(5-phospho-beta-D-ribosyl)imidazole-4-carboxamide + L-glutamine = D-erythro-1-(imidazol-4-yl)glycerol 3-phosphate + 5-amino-1-(5-phospho-beta-D-ribosyl)imidazole-4-carboxamide + L-glutamate + H(+). Its pathway is amino-acid biosynthesis; L-histidine biosynthesis; L-histidine from 5-phospho-alpha-D-ribose 1-diphosphate: step 5/9. Functionally, IGPS catalyzes the conversion of PRFAR and glutamine to IGP, AICAR and glutamate. The HisF subunit catalyzes the cyclization activity that produces IGP and AICAR from PRFAR using the ammonia provided by the HisH subunit. This is Imidazole glycerol phosphate synthase subunit HisF from Endomicrobium trichonymphae.